A 317-amino-acid chain; its full sequence is Lipase 1 (317 aa).

An N-terminal signal peptide occupies residues 1–18; that stretch reads MLLKRLCFAALFSLSMVG. Residue cysteine 19 is the site of N-palmitoyl cysteine attachment. Cysteine 19 is lipidated: S-diacylglycerol cysteine. Residues 69–296 form the AB hydrolase-1 domain; that stretch reads PLLLIHGFGG…MEDVGHVPMV (228 aa). Histidine 74 is an active-site residue. The active-site Nucleophile is serine 142. Catalysis depends on charge relay system residues glutamate 270 and histidine 292.

Its subcellular location is the cell outer membrane. The enzyme catalyses a triacylglycerol + H2O = a diacylglycerol + a fatty acid + H(+). The protein is Lipase 1 (lip1) of Psychrobacter immobilis.